Consider the following 315-residue polypeptide: UDP-3-O-acyl-N-acetylglucosamine deacetylase (315 aa).

Zn(2+) is bound by residues histidine 78, histidine 235, and aspartate 239. Histidine 262 acts as the Proton donor in catalysis.

Belongs to the LpxC family. Zn(2+) serves as cofactor.

It catalyses the reaction a UDP-3-O-[(3R)-3-hydroxyacyl]-N-acetyl-alpha-D-glucosamine + H2O = a UDP-3-O-[(3R)-3-hydroxyacyl]-alpha-D-glucosamine + acetate. The protein operates within glycolipid biosynthesis; lipid IV(A) biosynthesis; lipid IV(A) from (3R)-3-hydroxytetradecanoyl-[acyl-carrier-protein] and UDP-N-acetyl-alpha-D-glucosamine: step 2/6. In terms of biological role, catalyzes the hydrolysis of UDP-3-O-myristoyl-N-acetylglucosamine to form UDP-3-O-myristoylglucosamine and acetate, the committed step in lipid A biosynthesis. This Syntrophus aciditrophicus (strain SB) protein is UDP-3-O-acyl-N-acetylglucosamine deacetylase.